Consider the following 159-residue polypeptide: SsrA-binding protein (159 aa).

The tract at residues 134–159 is disordered; that stretch reads KLHDKRETSKERDWNRQKNRLLKERG. Over residues 137–159 the composition is skewed to basic and acidic residues; the sequence is DKRETSKERDWNRQKNRLLKERG.

Belongs to the SmpB family.

It is found in the cytoplasm. Its function is as follows. Required for rescue of stalled ribosomes mediated by trans-translation. Binds to transfer-messenger RNA (tmRNA), required for stable association of tmRNA with ribosomes. tmRNA and SmpB together mimic tRNA shape, replacing the anticodon stem-loop with SmpB. tmRNA is encoded by the ssrA gene; the 2 termini fold to resemble tRNA(Ala) and it encodes a 'tag peptide', a short internal open reading frame. During trans-translation Ala-aminoacylated tmRNA acts like a tRNA, entering the A-site of stalled ribosomes, displacing the stalled mRNA. The ribosome then switches to translate the ORF on the tmRNA; the nascent peptide is terminated with the 'tag peptide' encoded by the tmRNA and targeted for degradation. The ribosome is freed to recommence translation, which seems to be the essential function of trans-translation. The protein is SsrA-binding protein of Rhizobium meliloti (strain 1021) (Ensifer meliloti).